We begin with the raw amino-acid sequence, 90 residues long: Probable Fe(2+)-trafficking protein (90 aa).

This sequence belongs to the Fe(2+)-trafficking protein family.

Could be a mediator in iron transactions between iron acquisition and iron-requiring processes, such as synthesis and/or repair of Fe-S clusters in biosynthetic enzymes. The polypeptide is Probable Fe(2+)-trafficking protein (Variovorax paradoxus (strain S110)).